We begin with the raw amino-acid sequence, 698 residues long: MCNTKCYNTLAKMTVITEPAMEYMYSVPLDESEYDKCGFCQDPRYRPRRHKDQHLARAGSAKAKELCEALIGVYPRPTCESAVGHSIALVMPECMPGRVEAMGEFMESIFYMDNIAESGSQQDTGNLGTEWANDMETGPTTSVNSNTGAKQVMAKLALQLLSIDPVCAGNVMKAWKEWAAGFAKPRRFDSIEQYIDYRLVDSGAIVAVHLMNFGMGLDISVEELREVSDIVNHAGKALSYQNDFFSFNYEHDMFVKLPDSIGIANAVFVLAETEGLSLAEAKERVKELAKEHEDAVLRLKDEVESKVSYKLRICLEGLVDMVVGNLVWSASCDRYSSYRREKHQMELPIRIQGPPTPPQEPVYEKATLPNGKQLDAPTESSGKDLSDGVATLSGDEPVLGDEIVSAPIKYLESLPSKGFREAIIDGMNGWLNLPARSVSIIKDVVKHIHTASLLCDDIEDSSPLRRGQPSAHIIFGVSQTVNSTSYLWTLAIDRLSELSSPKSLRIFIDEVRKMQIGQSFDLHWTAALQCPSEEEYLSMIDMKTGGLFHLLIRLMIAESPRKVDMDFSGLVSMTGRYFQIRDDLSNLTSEEYENQKGYCEDLDEGKYSLPLIHALKHTKNKVQLESLLIQRKTQGGMTLEMKRLAIQIMKEAGSLEHTRKVVLELQDAVHRELAKLEEAFGQENYVIQLALERLRIKA.

Positions M21–R340 are terpene cyclase. D113 contributes to the Mg(2+) binding site. Residues D113–E117 carry the DDXXD 1 motif. The NSE/DTE motif lies at N242 to E250. A prenyltransferase region spans residues E341–I696. The tract at residues L368–D387 is disordered. Isopentenyl diphosphate contacts are provided by K417, R420, and H449. Mg(2+) is bound by residues D456 and D460. A DDXXD 2 motif is present at residues D456–D460. R465 provides a ligand contact to dimethylallyl diphosphate. R466 is an isopentenyl diphosphate binding site. Residues K543, T544, Q579, N586, K596, and K606 each coordinate dimethylallyl diphosphate.

This sequence in the N-terminal section; belongs to the terpene synthase family. The protein in the C-terminal section; belongs to the FPP/GGPP synthase family. Hexamer. It depends on Mg(2+) as a cofactor.

It catalyses the reaction 5 isopentenyl diphosphate + dimethylallyl diphosphate = all-trans-hexaprenyl diphosphate + 5 diphosphate. The catalysed reaction is all-trans-hexaprenyl diphosphate = macrophomene + diphosphate. In terms of biological role, bifunctional terpene synthase that converts dimethylallyl diphosphate (DMAPP) and isopentenyl diphosphate (IPP) into macrophomene as a single product. The C-terminal prenyltransferase (PT) domain of MpMS catalyzes formation of hexaprenyl diphosphate (HexPP), whereas the N-terminal terpene cyclase (TC) domain catalyzes the cyclization of HexPP to macrophomene. The polypeptide is Macrophomene synthase (Macrophomina phaseolina (strain MS6) (Charcoal rot fungus)).